The primary structure comprises 86 residues: Kappa-theraphotoxin-Cg1a 4 (86 aa).

Residues 1-21 form the signal peptide; that stretch reads MKASVLITLAVLGVMFVWASA. The propeptide occupies 22–50; that stretch reads AELEERGSDQRDSPAWLKSMERIFQSEER. Disulfide bonds link Cys52-Cys66, Cys59-Cys71, and Cys65-Cys78. Position 84 is a phenylalanine amide (Phe84).

This sequence belongs to the neurotoxin 10 (Hwtx-1) family. 28 (Jztx-11) subfamily. In terms of tissue distribution, expressed by the venom gland.

The protein localises to the secreted. Its function is as follows. This toxin acts as a voltage-dependent gating-modifier. It inhibits the sodium conductance (IC(50)=124 nM) and slows the fast inactivation (EC(50)=1180 nM) of Nav1.5/SCN5A. It significantly shifts the activation to more depolarized voltages and decreases the deactivation of Nav1.5 currents upon extreme depolarization, but only slightly affects voltage-dependence of steady-state inactivation. In addition, this toxin causes an approximately five-fold decrease in the rate of recovery from inactivation and an approximately 1.9-fold reduction in the closed-state inactivation rate. This toxin integrates the functions of site 3 toxins (alpha-scorpion toxins) with site 4 toxins (beta-scorpion and spider toxins) by targeting multiple sites on Nav1.5. Also shows inhibition of voltage-gated potassium channels (5 uM completely inhibits Kv2.1/KCNB1, whereas 5 uM moderately inhibits Kv4.2/KCND2 Kv4.1/KCND1 channels). This is Kappa-theraphotoxin-Cg1a 4 from Chilobrachys guangxiensis (Chinese earth tiger tarantula).